Here is a 461-residue protein sequence, read N- to C-terminus: Chromosomal replication initiator protein DnaA (461 aa).

The interval 1–83 (MDHSPWQRCL…LRFDVGSKPT (83 aa)) is domain I, interacts with DnaA modulators. The domain II stretch occupies residues 83–124 (TIDNSVTNSPVSRNTGGNESLFAKATSAPKVAEPESNIPKKT). A domain III, AAA+ region region spans residues 125-341 (NVRLNYTFEN…GALNRVIANA (217 aa)). ATP contacts are provided by G169, G171, K172, and T173. A domain IV, binds dsDNA region spans residues 342–461 (NFTGRAITID…YSNLIRTLSS (120 aa)).

This sequence belongs to the DnaA family. Oligomerizes as a right-handed, spiral filament on DNA at oriC.

The protein localises to the cytoplasm. In terms of biological role, plays an essential role in the initiation and regulation of chromosomal replication. ATP-DnaA binds to the origin of replication (oriC) to initiate formation of the DNA replication initiation complex once per cell cycle. Binds the DnaA box (a 9 base pair repeat at the origin) and separates the double-stranded (ds)DNA. Forms a right-handed helical filament on oriC DNA; dsDNA binds to the exterior of the filament while single-stranded (ss)DNA is stabiized in the filament's interior. The ATP-DnaA-oriC complex binds and stabilizes one strand of the AT-rich DNA unwinding element (DUE), permitting loading of DNA polymerase. After initiation quickly degrades to an ADP-DnaA complex that is not apt for DNA replication. Binds acidic phospholipids. The protein is Chromosomal replication initiator protein DnaA of Colwellia psychrerythraea (strain 34H / ATCC BAA-681) (Vibrio psychroerythus).